The following is a 351-amino-acid chain: Ribosomal RNA small subunit methyltransferase H (351 aa).

S-adenosyl-L-methionine is bound by residues 48-50 (GGY), D67, F94, D115, and Q122. A disordered region spans residues 274 to 351 (AAQASRHVPG…PAPQGRGPRR (78 aa)).

This sequence belongs to the methyltransferase superfamily. RsmH family.

It localises to the cytoplasm. It carries out the reaction cytidine(1402) in 16S rRNA + S-adenosyl-L-methionine = N(4)-methylcytidine(1402) in 16S rRNA + S-adenosyl-L-homocysteine + H(+). Its function is as follows. Specifically methylates the N4 position of cytidine in position 1402 (C1402) of 16S rRNA. This chain is Ribosomal RNA small subunit methyltransferase H, found in Methylorubrum extorquens (strain ATCC 14718 / DSM 1338 / JCM 2805 / NCIMB 9133 / AM1) (Methylobacterium extorquens).